The primary structure comprises 157 residues: Small ribosomal subunit protein uS7 (157 aa).

It belongs to the universal ribosomal protein uS7 family. In terms of assembly, part of the 30S ribosomal subunit. Contacts proteins S9 and S11.

In terms of biological role, one of the primary rRNA binding proteins, it binds directly to 16S rRNA where it nucleates assembly of the head domain of the 30S subunit. Is located at the subunit interface close to the decoding center, probably blocks exit of the E-site tRNA. The polypeptide is Small ribosomal subunit protein uS7 (Borreliella afzelii (strain PKo) (Borrelia afzelii)).